The following is a 355-amino-acid chain: Probable L-aspartate decarboxylase (355 aa).

Position 210 is an N6-(pyridoxal phosphate)lysine (K210).

Belongs to the group II decarboxylase family. MfnA subfamily. Pyridoxal 5'-phosphate is required as a cofactor.

The catalysed reaction is L-aspartate + H(+) = beta-alanine + CO2. It functions in the pathway cofactor biosynthesis; coenzyme A biosynthesis. Functionally, catalyzes the decarboxylation of L-aspartate to produce beta-alanine. This Halobacterium salinarum (strain ATCC 29341 / DSM 671 / R1) protein is Probable L-aspartate decarboxylase.